Consider the following 370-residue polypeptide: Queuine tRNA-ribosyltransferase (370 aa).

Asp-93 functions as the Proton acceptor in the catalytic mechanism. Residues 93–97, Asp-147, Gln-189, and Gly-216 contribute to the substrate site; that span reads DSGGF. Residues 247 to 253 are RNA binding; the sequence is GVGSPDC. Residue Asp-266 is the Nucleophile of the active site. The segment at 271-275 is RNA binding; important for wobble base 34 recognition; that stretch reads TRIAR. The Zn(2+) site is built by Cys-304, Cys-306, Cys-309, and His-335.

The protein belongs to the queuine tRNA-ribosyltransferase family. As to quaternary structure, homodimer. Within each dimer, one monomer is responsible for RNA recognition and catalysis, while the other monomer binds to the replacement base PreQ1. Requires Zn(2+) as cofactor.

The enzyme catalyses 7-aminomethyl-7-carbaguanine + guanosine(34) in tRNA = 7-aminomethyl-7-carbaguanosine(34) in tRNA + guanine. Its pathway is tRNA modification; tRNA-queuosine biosynthesis. In terms of biological role, catalyzes the base-exchange of a guanine (G) residue with the queuine precursor 7-aminomethyl-7-deazaguanine (PreQ1) at position 34 (anticodon wobble position) in tRNAs with GU(N) anticodons (tRNA-Asp, -Asn, -His and -Tyr). Catalysis occurs through a double-displacement mechanism. The nucleophile active site attacks the C1' of nucleotide 34 to detach the guanine base from the RNA, forming a covalent enzyme-RNA intermediate. The proton acceptor active site deprotonates the incoming PreQ1, allowing a nucleophilic attack on the C1' of the ribose to form the product. After dissociation, two additional enzymatic reactions on the tRNA convert PreQ1 to queuine (Q), resulting in the hypermodified nucleoside queuosine (7-(((4,5-cis-dihydroxy-2-cyclopenten-1-yl)amino)methyl)-7-deazaguanosine). In Desulforamulus reducens (strain ATCC BAA-1160 / DSM 100696 / MI-1) (Desulfotomaculum reducens), this protein is Queuine tRNA-ribosyltransferase.